A 981-amino-acid polypeptide reads, in one-letter code: Proline-rich transmembrane protein 3 (981 aa).

The first 27 residues, 1-27 (MASSPWGCVCGLLLLLLPLLGTGPALG), serve as a signal peptide directing secretion. At 28–474 (RGFPRPLENS…RVLSFSWELH (447 aa)) the chain is on the extracellular side. Disordered regions lie at residues 43 to 107 (PGAH…GAQR) and 169 to 457 (PPSL…TAPP). Over residues 65 to 85 (PRADSHRNSDVRHAPAEEMPE) the composition is skewed to basic and acidic residues. Residues 297-302 (SWEVSS) form an O-glycosylated at one site region. S329 carries O-linked (GalNAc...) serine glycosylation. The segment covering 331-340 (APDRPSKPER) has biased composition (basic and acidic residues). O-linked (GalNAc...) threonine glycosylation is present at T363. Residue N379 is glycosylated (N-linked (GlcNAc...) asparagine). Over residues 411–427 (APSTSRRGLIRVTTQRA) the composition is skewed to polar residues. A compositionally biased stretch (low complexity) spans 437 to 457 (TASSMASAPASSPPANATAPP). Residues 475–495 (VYGVGVLFLLPALLALAALAA) form a helical membrane-spanning segment. At 496–501 (APAGPR) the chain is on the cytoplasmic side. The chain crosses the membrane as a helical span at residues 502–522 (LALVAAVLVLVASALRSAYML). At 523–542 (TDPYGSQARLGVRGGLVLYN) the chain is on the extracellular side. The helical transmembrane segment at 543 to 563 (LPFPLLLTALAALTLLGLGAG) threads the bilayer. At 564–570 (LPPPLQN) the chain is on the cytoplasmic side. The chain crosses the membrane as a helical span at residues 571-591 (PLLLGAVALVHGVGLLATDLL). At 592-598 (STWSVLN) the chain is on the extracellular side. Residues 599 to 619 (LLTQGLSCAWGAAVALGTLCL) form a helical membrane-spanning segment. The Cytoplasmic segment spans residues 620 to 638 (CRRRLLDGPRGWDASPGPR). Residues 639–659 (LLAVAGALGLLASGLQLAAAL) form a helical membrane-spanning segment. The Extracellular segment spans residues 660–679 (WLYPGPGRVGRFSWAWWGVH). A helical transmembrane segment spans residues 680–700 (FWLRLLELTWALALALAAVAA). The Cytoplasmic portion of the chain corresponds to 701 to 981 (ARPRPPTEHA…RSASSDTIEL (281 aa)). Positions 759 to 807 (AESGQLATPSSGAWGSAASLGRGPQGGPGLSRNGVGPAPSLSELDLRPP) are disordered. Low complexity predominate over residues 765 to 780 (ATPSSGAWGSAASLGR). S777 bears the Phosphoserine mark. R780 is subject to Omega-N-methylarginine. Residues S789, S798, S808, S815, S854, S874, S902, S903, and S911 each carry the phosphoserine modification. Positions 836–865 (LRGLASPPPGGALRPRRGSHPKAELDDAGS) are disordered. Residues 937-981 (TVQLLPAPTPAPDSTAARQGDGQGEVQPRGKPGESRSASSDTIEL) form a disordered region. Residues 972–981 (RSASSDTIEL) are compositionally biased toward polar residues.

It is found in the membrane. The sequence is that of Proline-rich transmembrane protein 3 (PRRT3) from Homo sapiens (Human).